A 280-amino-acid chain; its full sequence is Shikimate dehydrogenase (NADP(+)) (280 aa).

Residues serine 15–serine 17 and threonine 62 contribute to the shikimate site. Lysine 66 functions as the Proton acceptor in the catalytic mechanism. Residues asparagine 88 and aspartate 104 each contribute to the shikimate site. Residues glycine 128–alanine 132, asparagine 151–arginine 156, and isoleucine 222 contribute to the NADP(+) site. A shikimate-binding site is contributed by tyrosine 224. Glycine 245 contributes to the NADP(+) binding site.

The protein belongs to the shikimate dehydrogenase family. As to quaternary structure, homodimer.

It catalyses the reaction shikimate + NADP(+) = 3-dehydroshikimate + NADPH + H(+). Its pathway is metabolic intermediate biosynthesis; chorismate biosynthesis; chorismate from D-erythrose 4-phosphate and phosphoenolpyruvate: step 4/7. In terms of biological role, involved in the biosynthesis of the chorismate, which leads to the biosynthesis of aromatic amino acids. Catalyzes the reversible NADPH linked reduction of 3-dehydroshikimate (DHSA) to yield shikimate (SA). In Methanosarcina acetivorans (strain ATCC 35395 / DSM 2834 / JCM 12185 / C2A), this protein is Shikimate dehydrogenase (NADP(+)).